We begin with the raw amino-acid sequence, 2205 residues long: Kinesin-related protein 1 (2205 aa).

The Kinesin motor domain maps to 2–355 (NVQVAVRVRP…LRYADSAKKI (354 aa)). 102–109 (GQTGSGKS) provides a ligand contact to ATP. A coiled-coil region spans residues 362 to 448 (NEDAQSKLIR…EDRMAALKDM (87 aa)). Residues 483-595 (TRIGRSDSEI…LTTGNRVILG (113 aa)) form the FHA domain. Residues 525–548 (FMNNNNNKENSSSTTPTSSKSPSK) are compositionally biased toward low complexity. Disordered stretches follow at residues 525-568 (FMNN…EKKL), 971-993 (SKQQ…SSKN), 1084-1226 (DNPL…TNSA), and 1455-1508 (THQQ…STIV). Over residues 549–568 (PKSEKEKENNNDDDDGEKKL) the composition is skewed to basic and acidic residues. 3 stretches are compositionally biased toward low complexity: residues 978 to 991 (TSSS…SSSS), 1089 to 1103 (SSSA…PNNS), and 1117 to 1142 (TPYS…QGTP). Positions 1143 to 1164 (YNPQSNNPNVISNAPPTPNSNL) are enriched in polar residues. Composition is skewed to low complexity over residues 1169-1226 (SLAA…TNSA) and 1455-1492 (THQQ…TSSS). The region spanning 1523–1616 (EDETSGYLKK…WVQTLDPLRK (94 aa)) is the PH domain. 3 coiled-coil regions span residues 1879–1918 (KDES…ETSA), 1946–2034 (SAQV…NGMA), and 2075–2149 (AHQS…KKKY).

It belongs to the TRAFAC class myosin-kinesin ATPase superfamily. Kinesin family. Unc-104 subfamily. As to quaternary structure, homodimer.

It localises to the cytoplasm. The protein localises to the cytoskeleton. The protein resides in the cytoplasmic vesicle membrane. Microtubule-associated force-producing protein that plays a role in organelle transport. Its motor activity is directed toward the microtubule's plus end. Transports cytoplasmic vesicles and particularly phosphatidylinositol 4,5-bisphosphate-containing liposomes along microtubules. This chain is Kinesin-related protein 1 (kif1), found in Dictyostelium discoideum (Social amoeba).